Reading from the N-terminus, the 274-residue chain is tRNA pseudouridine synthase A (274 aa).

D60 (nucleophile) is an active-site residue. Residue Y118 participates in substrate binding.

Belongs to the tRNA pseudouridine synthase TruA family. As to quaternary structure, homodimer.

It catalyses the reaction uridine(38/39/40) in tRNA = pseudouridine(38/39/40) in tRNA. Formation of pseudouridine at positions 38, 39 and 40 in the anticodon stem and loop of transfer RNAs. This is tRNA pseudouridine synthase A from Picosynechococcus sp. (strain ATCC 27264 / PCC 7002 / PR-6) (Agmenellum quadruplicatum).